Consider the following 173-residue polypeptide: RNA pyrophosphohydrolase (173 aa).

The 154-residue stretch at Pro-13–Ala-166 folds into the Nudix hydrolase domain. The Nudix box signature appears at Gly-54–Gly-75.

This sequence belongs to the Nudix hydrolase family. RppH subfamily. Requires a divalent metal cation as cofactor.

In terms of biological role, accelerates the degradation of transcripts by removing pyrophosphate from the 5'-end of triphosphorylated RNA, leading to a more labile monophosphorylated state that can stimulate subsequent ribonuclease cleavage. The protein is RNA pyrophosphohydrolase of Mesorhizobium japonicum (strain LMG 29417 / CECT 9101 / MAFF 303099) (Mesorhizobium loti (strain MAFF 303099)).